The sequence spans 337 residues: Serpentine receptor class delta-18 (337 aa).

The next 6 helical transmembrane spans lie at 2 to 22 (IIFF…LNLL), 90 to 110 (VGLS…LLSF), 130 to 150 (LILV…TIFA), 187 to 207 (IYSI…IFIL), 236 to 256 (ALTI…FYFL), and 270 to 290 (SIYA…LYFV).

Belongs to the nematode receptor-like protein srd family.

It localises to the membrane. This Caenorhabditis elegans protein is Serpentine receptor class delta-18 (srd-18).